Here is a 400-residue protein sequence, read N- to C-terminus: Enoyl-[acyl-carrier-protein] reductase [NADH] (400 aa).

Residues 48-53, 74-75, 111-112, and 139-140 each bind NAD(+); these read GASSGY, FE, DA, and LA. A substrate-binding site is contributed by Tyr225. Tyr235 (proton donor) is an active-site residue. Residues Lys244 and 273 to 275 each bind NAD(+); that span reads VVT.

The protein belongs to the TER reductase family. Monomer.

The catalysed reaction is a 2,3-saturated acyl-[ACP] + NAD(+) = a (2E)-enoyl-[ACP] + NADH + H(+). The protein operates within lipid metabolism; fatty acid biosynthesis. Functionally, involved in the final reduction of the elongation cycle of fatty acid synthesis (FAS II). Catalyzes the reduction of a carbon-carbon double bond in an enoyl moiety that is covalently linked to an acyl carrier protein (ACP). The protein is Enoyl-[acyl-carrier-protein] reductase [NADH] of Marinomonas sp. (strain MWYL1).